We begin with the raw amino-acid sequence, 461 residues long: Putative 2,3-dihydroxypropane-1-sulfonate exporter (461 aa).

Topologically, residues 1-20 (MSHITTEDPATLRLPFKEKL) are cytoplasmic. The helical transmembrane segment at 21 to 41 (SYGIGDLASNILLDIGTLYLL) threads the bilayer. Over 42 to 47 (KFYTDV) the chain is Periplasmic. The helical transmembrane segment at 48-68 (LGLPGTYGGIIFLISKFFTAF) threads the bilayer. Residues 69–92 (TDMGTGIMLDSRRKIGPKGKFRPF) lie on the Cytoplasmic side of the membrane. The chain crosses the membrane as a helical span at residues 93-113 (ILYASFPVTLLAIANFVGTPF). Over 114-123 (DVTGKTVMAT) the chain is Periplasmic. Residues 124–144 (ILFMLYGLFFSMMNCSYGAMV) form a helical membrane-spanning segment. Over 145 to 162 (PAITKNPNERASLAAWRQ) the chain is Cytoplasmic. Residues 163–183 (GGATLGLLLCTVGFVPVMNLI) traverse the membrane as a helical segment. Over 184 to 188 (EGNQQ) the chain is Periplasmic. A helical membrane pass occupies residues 189 to 209 (LGYIFAATLFSLFGLLFMWIC). Residues 210–243 (YSGVKERYVETQPANPAQKPGLLQSFRAIAGNRP) are Cytoplasmic-facing. A helical transmembrane segment spans residues 244–264 (LFILCIANLCTLGAFNVKLAI). The Periplasmic portion of the chain corresponds to 265 to 276 (QVYYTQYVLNDP). Residues 277 to 297 (ILLSYMGFFSMGCIFIGVFLM) form a helical membrane-spanning segment. Over 298 to 308 (PASVRRFGKKK) the chain is Cytoplasmic. Residues 309–329 (VYIGGLLIWVLGDLLNYFFGG) form a helical membrane-spanning segment. Gly330 is a topological domain (periplasmic). A helical membrane pass occupies residues 331–351 (SVSFVAFSCLAFFGSAFVNSL). Residues 352 to 387 (NWALVSDTVEYGEWRTGVRSEGTVYTGFTFFRKVSQ) lie on the Cytoplasmic side of the membrane. The helical transmembrane segment at 388–408 (ALAGFFPGWMLTQIGYVPNVA) threads the bilayer. The Periplasmic segment spans residues 409–419 (QADHTIEGLRQ). A helical transmembrane segment spans residues 420-440 (LIFIYPSALAVVTIVAMGCFY). Residues 441–461 (SLNEKMYVRIVEEIEARKRTA) are Cytoplasmic-facing.

This sequence belongs to the sodium:galactoside symporter (TC 2.A.2) family.

Its subcellular location is the cell inner membrane. In terms of biological role, could be involved in the export of 2,3-dihydroxypropane-1-sulfonate (DHPS). This is Putative 2,3-dihydroxypropane-1-sulfonate exporter (yihP) from Escherichia coli (strain K12).